Reading from the N-terminus, the 101-residue chain is uncharacterized protein (101 aa).

This is an uncharacterized protein from Acanthamoeba polyphaga mimivirus (APMV).